The chain runs to 417 residues: Serine hydroxymethyltransferase 2 (417 aa).

(6S)-5,6,7,8-tetrahydrofolate-binding positions include L121 and 125–127; that span reads GHL. K230 is subject to N6-(pyridoxal phosphate)lysine. 355–357 is a binding site for (6S)-5,6,7,8-tetrahydrofolate; the sequence is SPF.

Belongs to the SHMT family. Homodimer. It depends on pyridoxal 5'-phosphate as a cofactor.

It localises to the cytoplasm. The catalysed reaction is (6R)-5,10-methylene-5,6,7,8-tetrahydrofolate + glycine + H2O = (6S)-5,6,7,8-tetrahydrofolate + L-serine. It functions in the pathway one-carbon metabolism; tetrahydrofolate interconversion. The protein operates within amino-acid biosynthesis; glycine biosynthesis; glycine from L-serine: step 1/1. Functionally, catalyzes the reversible interconversion of serine and glycine with tetrahydrofolate (THF) serving as the one-carbon carrier. This reaction serves as the major source of one-carbon groups required for the biosynthesis of purines, thymidylate, methionine, and other important biomolecules. Also exhibits THF-independent aldolase activity toward beta-hydroxyamino acids, producing glycine and aldehydes, via a retro-aldol mechanism. The protein is Serine hydroxymethyltransferase 2 of Pseudomonas syringae pv. syringae (strain B728a).